Consider the following 388-residue polypeptide: MVRDSMAAAFRPSNRVLLQALQILVYPGVGGSGSVSCRCPLGAKRYLLTDNVVKLKEFQQKKVAVACNLSGTKETYFRNLKKKLTQNKLILKGELITLLHLCESRDHVELAKNVIYRYHAENKNFTLGEYKFGPLFVRLCYELDLEESAVELMKDQHLRGFFSDSTSFNILMDMLFIKGKYKSALQVLIEMKNQDVKFTKDTYVLAFAICYKLNSPESFKICTTLREEALLKGEILSRRASCFAVALALNQNEMAKAVSIFSQIMNPESIACINLNIIIHIQSNMLENLIKTLKNAAEGNLSKFVKRHVFSEEVLAKVREKVKDVPALVAKFDEIYGTLHITGQVTTDSLDAVLCHTPRDRKSHTLLLNKRMVSRRTFQPLSQSLLAE.

The PPR repeat unit spans residues 166–200 (TSFNILMDMLFIKGKYKSALQVLIEMKNQDVKFTK). Serine 382 bears the Phosphoserine mark.

The protein belongs to the PTCD2 family.

The protein resides in the mitochondrion. Its function is as follows. Involved in mitochondrial RNA maturation and mitochondrial respiratory chain function. The protein is Pentatricopeptide repeat-containing protein 2, mitochondrial (PTCD2) of Homo sapiens (Human).